The following is a 151-amino-acid chain: Small ribosomal subunit protein uS15 (151 aa).

Belongs to the universal ribosomal protein uS15 family.

The polypeptide is Small ribosomal subunit protein uS15 (RPS13) (Zea mays (Maize)).